A 481-amino-acid chain; its full sequence is Aspartyl/glutamyl-tRNA(Asn/Gln) amidotransferase subunit B (481 aa).

The interval 29-50 (SSSKSSHTDPKNTNISPIDLGH) is disordered.

Belongs to the GatB/GatE family. GatB subfamily. Heterotrimer of A, B and C subunits.

It carries out the reaction L-glutamyl-tRNA(Gln) + L-glutamine + ATP + H2O = L-glutaminyl-tRNA(Gln) + L-glutamate + ADP + phosphate + H(+). The enzyme catalyses L-aspartyl-tRNA(Asn) + L-glutamine + ATP + H2O = L-asparaginyl-tRNA(Asn) + L-glutamate + ADP + phosphate + 2 H(+). Functionally, allows the formation of correctly charged Asn-tRNA(Asn) or Gln-tRNA(Gln) through the transamidation of misacylated Asp-tRNA(Asn) or Glu-tRNA(Gln) in organisms which lack either or both of asparaginyl-tRNA or glutaminyl-tRNA synthetases. The reaction takes place in the presence of glutamine and ATP through an activated phospho-Asp-tRNA(Asn) or phospho-Glu-tRNA(Gln). The polypeptide is Aspartyl/glutamyl-tRNA(Asn/Gln) amidotransferase subunit B (Malacoplasma penetrans (strain HF-2) (Mycoplasma penetrans)).